Reading from the N-terminus, the 175-residue chain is NADH-ubiquinone oxidoreductase chain 6 (175 aa).

5 helical membrane passes run 1–21 (MMTY…VSFS), 25–45 (SPIY…GIVL), 47–67 (FGGS…MLVV), 88–108 (AVLA…CYIL), and 149–169 (YGTW…LVIM).

The protein belongs to the complex I subunit 6 family. Core subunit of respiratory chain NADH dehydrogenase (Complex I) which is composed of 45 different subunits.

The protein resides in the mitochondrion inner membrane. The catalysed reaction is a ubiquinone + NADH + 5 H(+)(in) = a ubiquinol + NAD(+) + 4 H(+)(out). In terms of biological role, core subunit of the mitochondrial membrane respiratory chain NADH dehydrogenase (Complex I) which catalyzes electron transfer from NADH through the respiratory chain, using ubiquinone as an electron acceptor. Essential for the catalytic activity and assembly of complex I. The sequence is that of NADH-ubiquinone oxidoreductase chain 6 (MT-ND6) from Felis catus (Cat).